Reading from the N-terminus, the 110-residue chain is Insulin (110 aa).

Positions 1–24 are cleaved as a signal peptide; that stretch reads MALWTRLLPLLALLALLGPDPAQA. Cystine bridges form between Cys-31–Cys-96, Cys-43–Cys-109, and Cys-95–Cys-100. Positions 57–87 are cleaved as a propeptide — c peptide; the sequence is EVEEQQGGQVELGGGPGAGLPQPLALEMALQ.

It belongs to the insulin family. In terms of assembly, heterodimer of a B chain and an A chain linked by two disulfide bonds.

It localises to the secreted. Insulin decreases blood glucose concentration. It increases cell permeability to monosaccharides, amino acids and fatty acids. It accelerates glycolysis, the pentose phosphate cycle, and glycogen synthesis in liver. The sequence is that of Insulin (INS) from Ictidomys tridecemlineatus (Thirteen-lined ground squirrel).